We begin with the raw amino-acid sequence, 307 residues long: tRNA pseudouridine synthase B (307 aa).

Asp-38 (nucleophile) is an active-site residue.

This sequence belongs to the pseudouridine synthase TruB family. Type 1 subfamily.

The catalysed reaction is uridine(55) in tRNA = pseudouridine(55) in tRNA. Functionally, responsible for synthesis of pseudouridine from uracil-55 in the psi GC loop of transfer RNAs. The polypeptide is tRNA pseudouridine synthase B (Bacillus anthracis).